Here is a 398-residue protein sequence, read N- to C-terminus: Nicotinate phosphoribosyltransferase 2 (398 aa).

Phosphohistidine; by autocatalysis is present on histidine 224.

The protein belongs to the NAPRTase family. Post-translationally, transiently phosphorylated on a His residue during the reaction cycle. Phosphorylation strongly increases the affinity for substrates and increases the rate of nicotinate D-ribonucleotide production. Dephosphorylation regenerates the low-affinity form of the enzyme, leading to product release.

It catalyses the reaction nicotinate + 5-phospho-alpha-D-ribose 1-diphosphate + ATP + H2O = nicotinate beta-D-ribonucleotide + ADP + phosphate + diphosphate. It participates in cofactor biosynthesis; NAD(+) biosynthesis; nicotinate D-ribonucleotide from nicotinate: step 1/1. Its function is as follows. Catalyzes the synthesis of beta-nicotinate D-ribonucleotide from nicotinate and 5-phospho-D-ribose 1-phosphate at the expense of ATP. In Pseudomonas aeruginosa (strain ATCC 15692 / DSM 22644 / CIP 104116 / JCM 14847 / LMG 12228 / 1C / PRS 101 / PAO1), this protein is Nicotinate phosphoribosyltransferase 2.